The sequence spans 360 residues: Histidinol-phosphate aminotransferase (360 aa).

K221 carries the post-translational modification N6-(pyridoxal phosphate)lysine.

Belongs to the class-II pyridoxal-phosphate-dependent aminotransferase family. Histidinol-phosphate aminotransferase subfamily. In terms of assembly, homodimer. Pyridoxal 5'-phosphate is required as a cofactor.

It carries out the reaction L-histidinol phosphate + 2-oxoglutarate = 3-(imidazol-4-yl)-2-oxopropyl phosphate + L-glutamate. It functions in the pathway amino-acid biosynthesis; L-histidine biosynthesis; L-histidine from 5-phospho-alpha-D-ribose 1-diphosphate: step 7/9. This Desulfitobacterium hafniense (strain Y51) protein is Histidinol-phosphate aminotransferase.